A 460-amino-acid polypeptide reads, in one-letter code: Arginine decarboxylase (460 aa).

The residue at position 226 (Lys-226) is an N6-(pyridoxal phosphate)lysine.

Belongs to the Orn/Lys/Arg decarboxylase class-I family. Pyridoxal 5'-phosphate serves as cofactor.

It is found in the cytoplasm. It carries out the reaction L-arginine + H(+) = agmatine + CO2. Its pathway is amine and polyamine biosynthesis; agmatine biosynthesis; agmatine from L-arginine: step 1/1. Its function is as follows. Catalyzes the formation of agmatine from arginine. The protein is Arginine decarboxylase (speA) of Bacillus cereus (strain ATCC 14579 / DSM 31 / CCUG 7414 / JCM 2152 / NBRC 15305 / NCIMB 9373 / NCTC 2599 / NRRL B-3711).